We begin with the raw amino-acid sequence, 335 residues long: Nuclear transcription factor Y subunit gamma (335 aa).

Belongs to the NFYC/HAP5 subunit family. As to quaternary structure, heterotrimeric transcription factor composed of three components, NF-YA, NF-YB and NF-YC. NF-YB and NF-YC must interact and dimerize for NF-YA association and DNA binding.

It localises to the nucleus. In terms of biological role, component of the sequence-specific heterotrimeric transcription factor (NF-Y) which specifically recognizes a 5'-CCAAT-3' box motif found in the promoters of its target genes. NF-Y can function as both an activator and a repressor, depending on its interacting cofactors. The polypeptide is Nuclear transcription factor Y subunit gamma (Nfyc) (Rattus norvegicus (Rat)).